Reading from the N-terminus, the 231-residue chain is MKMLILAVSCLLAITGSLAADTCYNDVALDCGITSNSLALPRCNAVYGEYGSHGNVATELQAYAKLHLERSYDYLLSAAYFNNYQTNRAGFSKLFKKLSDEAWSKTIDIIKHVTKRGDKMNFDQHSTMKTERKNYTAENHELEALAKALDTQKELAERAFYIHREATRNSQHLHDPEIAQYLEEEFIEDHAEKIRTLAGHTSDLKKFITANNGHDLSLALYVFDEYLQKTV.

The N-terminal stretch at 1 to 19 (MKMLILAVSCLLAITGSLA) is a signal peptide. Cys23 and Cys43 form a disulfide bridge. Positions 50-208 (YGSHGNVATE…GHTSDLKKFI (159 aa)) constitute a Ferritin-like diiron domain. Asn134 carries an N-linked (GlcNAc...) asparagine glycan.

The protein belongs to the ferritin family. Oligomer of 12 light (L) chains and 12 heavy (H) chains; L and H chains are disulfide-linked. The functional molecule forms a roughly spherical shell with a diameter of 12 nm and contains a central cavity into which the insoluble ferric iron core is deposited.

It is found in the golgi apparatus. It localises to the secreted. Its function is as follows. Stores iron in a soluble, non-toxic, readily available form. Important for iron homeostasis. Iron is taken up in the ferrous form and deposited as ferric hydroxides after oxidation. Ferritin is composed of a heavy (H) chain which is responsible for the oxidation and uptake of ferrous iron, and a light (L) chain which facilitates the nucleation of the ferrihydrite iron core. This chain is Ferritin light chain, found in Trichoplusia ni (Cabbage looper).